The primary structure comprises 361 residues: Alanine racemase (361 aa).

K35 serves as the catalytic Proton acceptor; specific for D-alanine. Residue K35 is modified to N6-(pyridoxal phosphate)lysine. R130 lines the substrate pocket. Y257 serves as the catalytic Proton acceptor; specific for L-alanine. Residue M305 participates in substrate binding.

Belongs to the alanine racemase family. Pyridoxal 5'-phosphate is required as a cofactor.

It catalyses the reaction L-alanine = D-alanine. It functions in the pathway amino-acid biosynthesis; D-alanine biosynthesis; D-alanine from L-alanine: step 1/1. Catalyzes the interconversion of L-alanine and D-alanine. May also act on other amino acids. This is Alanine racemase (alr) from Nitrosomonas eutropha (strain DSM 101675 / C91 / Nm57).